The sequence spans 355 residues: UDP-N-acetylglucosamine--N-acetylmuramyl-(pentapeptide) pyrophosphoryl-undecaprenol N-acetylglucosamine transferase (355 aa).

Residues 15 to 17 (TGG), asparagine 127, arginine 163, serine 191, isoleucine 244, 263 to 268 (ALTVSE), and glutamine 288 contribute to the UDP-N-acetyl-alpha-D-glucosamine site.

It belongs to the glycosyltransferase 28 family. MurG subfamily.

Its subcellular location is the cell inner membrane. The enzyme catalyses di-trans,octa-cis-undecaprenyl diphospho-N-acetyl-alpha-D-muramoyl-L-alanyl-D-glutamyl-meso-2,6-diaminopimeloyl-D-alanyl-D-alanine + UDP-N-acetyl-alpha-D-glucosamine = di-trans,octa-cis-undecaprenyl diphospho-[N-acetyl-alpha-D-glucosaminyl-(1-&gt;4)]-N-acetyl-alpha-D-muramoyl-L-alanyl-D-glutamyl-meso-2,6-diaminopimeloyl-D-alanyl-D-alanine + UDP + H(+). The protein operates within cell wall biogenesis; peptidoglycan biosynthesis. In terms of biological role, cell wall formation. Catalyzes the transfer of a GlcNAc subunit on undecaprenyl-pyrophosphoryl-MurNAc-pentapeptide (lipid intermediate I) to form undecaprenyl-pyrophosphoryl-MurNAc-(pentapeptide)GlcNAc (lipid intermediate II). The polypeptide is UDP-N-acetylglucosamine--N-acetylmuramyl-(pentapeptide) pyrophosphoryl-undecaprenol N-acetylglucosamine transferase (Escherichia coli O45:K1 (strain S88 / ExPEC)).